The following is a 301-amino-acid chain: Ribonuclease HIII (301 aa).

The region spanning Arg88–Ser301 is the RNase H type-2 domain. Asp94, Glu95, and Asp198 together coordinate a divalent metal cation.

The protein belongs to the RNase HII family. RnhC subfamily. The cofactor is Mn(2+). Requires Mg(2+) as cofactor.

The protein resides in the cytoplasm. It catalyses the reaction Endonucleolytic cleavage to 5'-phosphomonoester.. Its function is as follows. Endonuclease that specifically degrades the RNA of RNA-DNA hybrids. In Chlamydia muridarum (strain MoPn / Nigg), this protein is Ribonuclease HIII (rnhC).